The primary structure comprises 150 residues: N-alpha-acetyltransferase 30 (150 aa).

The region spanning 2-150 (VTIVPYSHQY…DAFRYILYPN (149 aa)) is the N-acetyltransferase domain.

It belongs to the acetyltransferase family. MAK3 subfamily.

The protein localises to the cytoplasm. It is found in the nucleus. The catalysed reaction is N-terminal L-methionyl-L-leucyl-[protein] + acetyl-CoA = N-terminal N(alpha)-acetyl-L-methionyl-L-leucyl-[protein] + CoA + H(+). It catalyses the reaction N-terminal L-methionyl-L-isoleucyl-[protein] + acetyl-CoA = N-terminal N(alpha)-acetyl-L-methionyl-L-isoleucyl-[protein] + CoA + H(+). The enzyme catalyses N-terminal L-methionyl-L-phenylalanyl-[protein] + acetyl-CoA = N-terminal N(alpha)-acetyl-L-methionyl-L-phenylalanyl-[protein] + CoA + H(+). It carries out the reaction N-terminal L-methionyl-L-tryptophyl-[protein] + acetyl-CoA = N-terminal N(alpha)-acetyl-L-methionyl-L-tryptophyl-[protein] + CoA + H(+). The catalysed reaction is N-terminal L-methionyl-L-tyrosyl-[protein] + acetyl-CoA = N-terminal N(alpha)-acetyl-L-methionyl-L-tyrosyl-[protein] + CoA + H(+). Functionally, catalytic component of the NatC N-terminal acetyltransferase. In Schizosaccharomyces pombe (strain 972 / ATCC 24843) (Fission yeast), this protein is N-alpha-acetyltransferase 30 (naa30).